A 437-amino-acid chain; its full sequence is Serine--tRNA ligase (437 aa).

T244–E246 contacts L-serine. R275 to E277 contributes to the ATP binding site. E298 is a binding site for L-serine. Position 362 to 365 (E362 to S365) interacts with ATP. S397 provides a ligand contact to L-serine.

It belongs to the class-II aminoacyl-tRNA synthetase family. Type-1 seryl-tRNA synthetase subfamily. In terms of assembly, homodimer. The tRNA molecule binds across the dimer.

Its subcellular location is the cytoplasm. The catalysed reaction is tRNA(Ser) + L-serine + ATP = L-seryl-tRNA(Ser) + AMP + diphosphate + H(+). The enzyme catalyses tRNA(Sec) + L-serine + ATP = L-seryl-tRNA(Sec) + AMP + diphosphate + H(+). It participates in aminoacyl-tRNA biosynthesis; selenocysteinyl-tRNA(Sec) biosynthesis; L-seryl-tRNA(Sec) from L-serine and tRNA(Sec): step 1/1. Functionally, catalyzes the attachment of serine to tRNA(Ser). Is also able to aminoacylate tRNA(Sec) with serine, to form the misacylated tRNA L-seryl-tRNA(Sec), which will be further converted into selenocysteinyl-tRNA(Sec). The sequence is that of Serine--tRNA ligase from Nitrosomonas eutropha (strain DSM 101675 / C91 / Nm57).